A 760-amino-acid chain; its full sequence is Xaa-Pro dipeptidyl-peptidase (760 aa).

Active-site charge relay system residues include serine 349, aspartate 469, and histidine 499.

The protein belongs to the peptidase S15 family. In terms of assembly, homodimer.

It is found in the cytoplasm. The catalysed reaction is Hydrolyzes Xaa-Pro-|- bonds to release unblocked, N-terminal dipeptides from substrates including Ala-Pro-|-p-nitroanilide and (sequentially) Tyr-Pro-|-Phe-Pro-|-Gly-Pro-|-Ile.. Its function is as follows. Removes N-terminal dipeptides sequentially from polypeptides having unsubstituted N-termini provided that the penultimate residue is proline. This chain is Xaa-Pro dipeptidyl-peptidase, found in Streptococcus pyogenes serotype M6 (strain ATCC BAA-946 / MGAS10394).